Here is a 149-residue protein sequence, read N- to C-terminus: Large ribosomal subunit protein uL22c (149 aa).

This sequence belongs to the universal ribosomal protein uL22 family. In terms of assembly, part of the 50S ribosomal subunit.

Its subcellular location is the plastid. The protein resides in the chloroplast. This protein binds specifically to 23S rRNA. In terms of biological role, the globular domain of the protein is located near the polypeptide exit tunnel on the outside of the subunit, while an extended beta-hairpin is found that lines the wall of the exit tunnel in the center of the 70S ribosome. This is Large ribosomal subunit protein uL22c (rpl22) from Brachypodium distachyon (Purple false brome).